A 188-amino-acid polypeptide reads, in one-letter code: Photosystem I assembly protein Ycf4 (188 aa).

A run of 2 helical transmembrane segments spans residues 26-46 (IWWGTVAAIGGIGFLLAGLSS) and 70-90 (LLFYGIAGSALSLYLWFTIIL).

Belongs to the Ycf4 family.

The protein resides in the cellular thylakoid membrane. Its function is as follows. Seems to be required for the assembly of the photosystem I complex. This chain is Photosystem I assembly protein Ycf4, found in Rippkaea orientalis (strain PCC 8801 / RF-1) (Cyanothece sp. (strain PCC 8801)).